A 268-amino-acid polypeptide reads, in one-letter code: Phosphatidylglycerol--prolipoprotein diacylglyceryl transferase (268 aa).

3 helical membrane passes run 16–36 (FITL…GIWL), 56–76 (IWLV…FNWG), and 92–112 (GIAI…FTYV). Residue Arg136 coordinates a 1,2-diacyl-sn-glycero-3-phospho-(1'-sn-glycerol). 3 consecutive transmembrane segments (helical) span residues 175–195 (PTFL…LWLF), 204–224 (GTLL…IEGL), and 236–256 (IAQV…FRLY).

Belongs to the Lgt family.

The protein resides in the cell inner membrane. The catalysed reaction is L-cysteinyl-[prolipoprotein] + a 1,2-diacyl-sn-glycero-3-phospho-(1'-sn-glycerol) = an S-1,2-diacyl-sn-glyceryl-L-cysteinyl-[prolipoprotein] + sn-glycerol 1-phosphate + H(+). It participates in protein modification; lipoprotein biosynthesis (diacylglyceryl transfer). Functionally, catalyzes the transfer of the diacylglyceryl group from phosphatidylglycerol to the sulfhydryl group of the N-terminal cysteine of a prolipoprotein, the first step in the formation of mature lipoproteins. This chain is Phosphatidylglycerol--prolipoprotein diacylglyceryl transferase, found in Thermosynechococcus vestitus (strain NIES-2133 / IAM M-273 / BP-1).